Here is a 374-residue protein sequence, read N- to C-terminus: GDSL esterase/lipase At1g71250 (374 aa).

Positions 1-28 (MNTNRKKMKVHIGGYVLILALTVSVILQ) are cleaved as a signal peptide. Ser48 acts as the Nucleophile in catalysis. Asn162 carries an N-linked (GlcNAc...) asparagine glycan. Active-site residues include Asp338 and His341.

Belongs to the 'GDSL' lipolytic enzyme family.

The protein resides in the secreted. The polypeptide is GDSL esterase/lipase At1g71250 (Arabidopsis thaliana (Mouse-ear cress)).